Here is a 778-residue protein sequence, read N- to C-terminus: DNA topoisomerase 1 (778 aa).

The disordered stretch occupies residues 1 to 141; the sequence is MNSSDEEDIA…ETPEEDQGYK (141 aa). Over residues 17–26 the composition is skewed to low complexity; sequence KSSSITSAST. 2 stretches are compositionally biased toward basic and acidic residues: residues 71–83 and 100–121; these read VKTE…EPKS and EKTT…ESKT. Residues 122-131 show a composition bias toward polar residues; sequence QSDSQASVKS. 3 interaction with DNA regions span residues 367–368, 430–435, and 522–524; these read KY, RAGGEK, and TAK. Residues 374–778 form the Topo IB-type catalytic domain; it reads NSSVKGQSDF…IESADENWRF (405 aa). Catalysis depends on Y736, which acts as the O-(3'-phospho-DNA)-tyrosine intermediate.

The protein belongs to the type IB topoisomerase family.

The enzyme catalyses ATP-independent breakage of single-stranded DNA, followed by passage and rejoining.. In terms of biological role, releases the supercoiling and torsional tension of DNA introduced during the DNA replication and transcription by transiently cleaving and rejoining one strand of the DNA duplex. Introduces a single-strand break via transesterification at a target site in duplex DNA. The scissile phosphodiester is attacked by the catalytic tyrosine of the enzyme, resulting in the formation of a DNA-(3'-phosphotyrosyl)-enzyme intermediate and the expulsion of a 5'-OH DNA strand. The free DNA strand then rotates around the intact phosphodiester bond on the opposing strand, thus removing DNA supercoils. Finally, in the religation step, the DNA 5'-OH attacks the covalent intermediate to expel the active-site tyrosine and restore the DNA phosphodiester backbone. The chain is DNA topoisomerase 1 (TOP1) from Candida albicans (Yeast).